A 1183-amino-acid chain; its full sequence is SR-related and CTD-associated factor 4 (1183 aa).

A CID domain is found at 1 to 139; it reads MDAVNAFNQE…PLLDMAAGTS (139 aa). An N6-acetyllysine modification is found at Lys49. Residue Ser154 is modified to Phosphoserine. Disordered regions lie at residues 299 to 324 and 348 to 561; these read VPVP…VQQP and HHQV…QIKS. Residues 367–380 are compositionally biased toward pro residues; sequence APPPFPPMPQPGMP. Residues 381-398 show a composition bias toward low complexity; the sequence is QPGMAQPGLAQPGMAQPT. Pro residues predominate over residues 399-410; sequence MPQPGMPQPGMP. Over residues 411–428 the composition is skewed to low complexity; sequence QPGMAQPGLAQPGMAQPG. Over residues 429–440 the composition is skewed to pro residues; it reads MPQPAMPQPAMP. Over residues 457–469 the composition is skewed to polar residues; sequence PTFQSTFQPQNEP. Residues 488–498 show a composition bias toward basic and acidic residues; that stretch reads EVKRHVPESRK. The span at 499 to 536 shows a compositional bias: basic residues; it reads SRSRSPKRRRSRSGSRSRRSRHRRSRSRSRDRRRHSPR. Residues 538-553 show a composition bias toward basic and acidic residues; sequence RSQERRDREKERERRQ. An RRM domain is found at 569 to 643; that stretch reads TTLWVGQLDK…KSIKIAWALN (75 aa). Disordered stretches follow at residues 691–722, 800–858, and 920–1183; these read WKGI…IPKP, LPPG…SLPT, and MPPH…EPPR. A Phosphoserine modification is found at Ser717. Pro residues-rich tracts occupy residues 800–823 and 920–952; these read LPPG…PPIS and MPPH…PPHG. Residues 1006 to 1020 are compositionally biased toward low complexity; that stretch reads SPSQQPAPAQQQPPQ. Residue Ser1042 is modified to Phosphoserine. A compositionally biased stretch (basic and acidic residues) spans 1047–1122; the sequence is VENDRERYGS…NRKEKHEVAD (76 aa). Residues 1136 to 1145 show a composition bias toward polar residues; sequence QVGTIDTVSE.

Interacts with POLR2A; via C-terminal heptapeptide repeat domain (CTD) phosphorylated at 'Ser-2' and 'Ser-5'.

It localises to the nucleus. In terms of biological role, anti-terminator protein required to prevent early mRNA termination during transcription. Together with SCAF8, acts by suppressing the use of early, alternative poly(A) sites, thereby preventing the accumulation of non-functional truncated proteins. Mechanistically, associates with the phosphorylated C-terminal heptapeptide repeat domain (CTD) of the largest RNA polymerase II subunit (POLR2A), and subsequently binds nascent RNA upstream of early polyadenylation sites to prevent premature mRNA transcript cleavage and polyadenylation. Independently of SCAF8, also acts as a suppressor of transcriptional readthrough. This chain is SR-related and CTD-associated factor 4, found in Mus musculus (Mouse).